The primary structure comprises 159 residues: Capsid protein (159 aa).

Serine 2 is modified (N-acetylserine; by host).

The protein belongs to the virgaviridae capsid protein family.

It is found in the virion. Functionally, capsid protein self-assembles to form rod-shaped virions about 18 nm in diameter with a central canal enclosing the viral genomic RNA. This chain is Capsid protein (CP), found in Nicotiana tabacum (Common tobacco).